The primary structure comprises 174 residues: Large ribosomal subunit protein uL10 (174 aa).

Belongs to the universal ribosomal protein uL10 family. In terms of assembly, part of the ribosomal stalk of the 50S ribosomal subunit. The N-terminus interacts with L11 and the large rRNA to form the base of the stalk. The C-terminus forms an elongated spine to which L12 dimers bind in a sequential fashion forming a multimeric L10(L12)X complex.

Forms part of the ribosomal stalk, playing a central role in the interaction of the ribosome with GTP-bound translation factors. The sequence is that of Large ribosomal subunit protein uL10 from Verminephrobacter eiseniae (strain EF01-2).